A 58-amino-acid chain; its full sequence is ATP synthase F(0) complex subunit k, mitochondrial (58 aa).

Residues Lys16 and Lys17 each carry the N6-acetyllysine modification. The chain crosses the membrane as a helical span at residues 23–45 (TLTGRMNCVLATYGGIALLVLYF).

As to quaternary structure, component of the ATP synthase complex composed at least of ATP5F1A/subunit alpha, ATP5F1B/subunit beta, ATP5MC1/subunit c (homooctomer), MT-ATP6/subunit a, MT-ATP8/subunit 8, ATP5ME/subunit e, ATP5MF/subunit f, ATP5MG/subunit g, ATP5MK/subunit k, ATP5MJ/subunit j, ATP5F1C/subunit gamma, ATP5F1D/subunit delta, ATP5F1E/subunit epsilon, ATP5PF/subunit F6, ATP5PB/subunit b, ATP5PD/subunit d, ATP5PO/subunit OSCP. ATP synthase complex consists of a soluble F(1) head domain (subunits alpha(3) and beta(3)) - the catalytic core - and a membrane F(0) domain - the membrane proton channel (subunits c, a, 8, e, f, g, k and j). These two domains are linked by a central stalk (subunits gamma, delta, and epsilon) rotating inside the F1 region and a stationary peripheral stalk (subunits F6, b, d, and OSCP). The ATP synthase complex/complex V exists as a monomeric and a dimeric supercomplex that helps shape mitochondrial cristae to optimize proton flow. As to expression, ubiquitous. Highly expressed in skeletal and cardiac muscle. Moderately expressed in brain, thymus, stomach and testis. Lowest expression levels were detected in lung, liver, kidney, adrenal gland, spleen, small intestine and adipose tissue. In streptozotocin-induced diabetes, the insulin-sensitive tissues skeletal and cardiac muscle were down-regulated.

The protein localises to the mitochondrion membrane. Subunit k, of the mitochondrial membrane ATP synthase complex (F(1)F(0) ATP synthase or Complex V) that produces ATP from ADP in the presence of a proton gradient across the membrane which is generated by electron transport complexes of the respiratory chain. ATP synthase complex consist of a soluble F(1) head domain - the catalytic core - and a membrane F(1) domain - the membrane proton channel. These two domains are linked by a central stalk rotating inside the F(1) region and a stationary peripheral stalk. During catalysis, ATP synthesis in the catalytic domain of F(1) is coupled via a rotary mechanism of the central stalk subunits to proton translocation. In vivo, can only synthesize ATP although its ATP hydrolase activity can be activated artificially in vitro. Part of the complex F(0) domain. Required for dimerization of the ATP synthase complex and as such regulates ATP synthesis in the mitochondria. In Rattus norvegicus (Rat), this protein is ATP synthase F(0) complex subunit k, mitochondrial (Atp5mk).